The following is a 365-amino-acid chain: Mannitol dehydrogenase (365 aa).

Residues C50, H72, C103, C106, C109, C117, and C166 each contribute to the Zn(2+) site.

Belongs to the zinc-containing alcohol dehydrogenase family. Zn(2+) serves as cofactor.

Its subcellular location is the cytoplasm. The catalysed reaction is D-mannitol + NAD(+) = D-mannose + NADH + H(+). Its function is as follows. Oxidizes mannitol to mannose. Provides the initial step by which translocated mannitol is committed to central metabolism and, by regulating mannitol pool size, is important in regulating salt tolerance at the cellular level. This chain is Mannitol dehydrogenase (MTD), found in Apium graveolens (Celery).